The sequence spans 150 residues: Non-structural protein (150 aa).

Positions 93–140 (PLFRIRFLLLIMSDSISLTDITISPGTLYSARTLLLRAAVLALTRKPM) are apoptotic activity.

Disrupts the host mitochondrial membrane potential and induces apoptosis probably by inducing host CASP8 and CASP9. The polypeptide is Non-structural protein (Bos taurus (Bovine)).